The sequence spans 167 residues: Protein-export protein SecB (167 aa).

The protein belongs to the SecB family. As to quaternary structure, homotetramer, a dimer of dimers. One homotetramer interacts with 1 SecA dimer.

Its subcellular location is the cytoplasm. Its function is as follows. One of the proteins required for the normal export of preproteins out of the cell cytoplasm. It is a molecular chaperone that binds to a subset of precursor proteins, maintaining them in a translocation-competent state. It also specifically binds to its receptor SecA. This is Protein-export protein SecB from Wolbachia pipientis wMel.